The chain runs to 517 residues: GMP synthase [glutamine-hydrolyzing] (517 aa).

A Glutamine amidotransferase type-1 domain is found at 9–199 (RILILDFGSQ…VLNVCGCEGL (191 aa)). Cysteine 86 (nucleophile) is an active-site residue. Residues histidine 173 and glutamate 175 contribute to the active site. Residues 200-392 (WTSASIIEDA…LGLPYNMLYR (193 aa)) enclose the GMPS ATP-PPase domain. 227–233 (SGGVDSS) contributes to the ATP binding site.

Homodimer.

The enzyme catalyses XMP + L-glutamine + ATP + H2O = GMP + L-glutamate + AMP + diphosphate + 2 H(+). It participates in purine metabolism; GMP biosynthesis; GMP from XMP (L-Gln route): step 1/1. Catalyzes the synthesis of GMP from XMP. The polypeptide is GMP synthase [glutamine-hydrolyzing] (Aliivibrio fischeri (strain MJ11) (Vibrio fischeri)).